We begin with the raw amino-acid sequence, 300 residues long: Phosphoribosylaminoimidazole-succinocarboxamide synthase (300 aa).

This sequence belongs to the SAICAR synthetase family.

It catalyses the reaction 5-amino-1-(5-phospho-D-ribosyl)imidazole-4-carboxylate + L-aspartate + ATP = (2S)-2-[5-amino-1-(5-phospho-beta-D-ribosyl)imidazole-4-carboxamido]succinate + ADP + phosphate + 2 H(+). Its pathway is purine metabolism; IMP biosynthesis via de novo pathway; 5-amino-1-(5-phospho-D-ribosyl)imidazole-4-carboxamide from 5-amino-1-(5-phospho-D-ribosyl)imidazole-4-carboxylate: step 1/2. The protein is Phosphoribosylaminoimidazole-succinocarboxamide synthase of Methylibium petroleiphilum (strain ATCC BAA-1232 / LMG 22953 / PM1).